Here is a 637-residue protein sequence, read N- to C-terminus: Chaperone protein HtpG (637 aa).

The segment at 1-345 (MSQQETHGFQ…SNDLPLNVSR (345 aa)) is a; substrate-binding. Residues 346–562 (EILQDNHVTK…EGEMSTQMIK (217 aa)) form a b region. Residues 563 to 637 (LMQAAGQPVP…MNQMLLANMK (75 aa)) form a c region.

Belongs to the heat shock protein 90 family. Homodimer.

The protein localises to the cytoplasm. Functionally, molecular chaperone. Has ATPase activity. This is Chaperone protein HtpG from Shewanella baltica (strain OS185).